The sequence spans 243 residues: Cell division protein ZipA (243 aa).

Residues 1–4 are Periplasmic-facing; it reads MSDV. A helical transmembrane segment spans residues 5–25; sequence TLLRIGIAIVGILFVAAVFFF. Topologically, residues 26–243 are cytoplasmic; it reads STPKTSAHRV…VPPLIKNSRW (218 aa). The interval 32–89 is disordered; it reads AHRVRTKKEEPPRERREPMLSTEVDNSPHQSVDEVPASVPQQQVNPEATKPGEIELGK. The segment covering 38 to 49 has biased composition (basic and acidic residues); the sequence is KKEEPPRERREP.

The protein belongs to the ZipA family. In terms of assembly, interacts with FtsZ via their C-terminal domains.

The protein localises to the cell inner membrane. Essential cell division protein that stabilizes the FtsZ protofilaments by cross-linking them and that serves as a cytoplasmic membrane anchor for the Z ring. Also required for the recruitment to the septal ring of downstream cell division proteins. This is Cell division protein ZipA from Xylella fastidiosa (strain Temecula1 / ATCC 700964).